Here is a 2049-residue protein sequence, read N- to C-terminus: Non-reducing polyketide synthase hmp3 (2049 aa).

The interval 9–246 (LYFGDQTDSW…NELSIHALQH (238 aa)) is N-terminal acylcarrier protein transacylase (SAT) domain. Positions 365–793 (PGRIAIVGMA…GGNASLILED (429 aa)) constitute a Ketosynthase family 3 (KS3) domain. Active-site for beta-ketoacyl synthase activity residues include Cys538, His673, and His712. Residues 887–1146 (VFVFTGQGSH…VDFVGALGAL (260 aa)) are malonyl-CoA:ACP transacylase (MAT) domain. The For acyl/malonyl transferase activity role is filled by Ser978. An N-terminal hotdog fold region spans residues 1265–1404 (QQIVEESSSP…AQTLQTSWNR (140 aa)). In terms of domain architecture, PKS/mFAS DH spans 1265–1573 (QQIVEESSSP…FHEVSNNVLD (309 aa)). Residues 1269–1572 (EESSSPSLHV…SFHEVSNNVL (304 aa)) form a product template (PT) domain region. The segment at 1425-1573 (GHRMLPSILY…FHEVSNNVLD (149 aa)) is C-terminal hotdog fold. Residues 1626-1704 (SSESELFHTI…DLRNEFARSS (79 aa)) form the Carrier domain. Position 1663 is an O-(pantetheine 4'-phosphoryl)serine (Ser1663). A disordered region spans residues 1700–1747 (FARSSTSTPPSKTFSEFSIVDATPESTRSSSRAPSEKKEPAPASEKSE). The span at 1703–1717 (SSTSTPPSKTFSEFS) shows a compositional bias: low complexity. Residues 1723-1732 (PESTRSSSRA) are compositionally biased toward polar residues. Residues 1733–1747 (PSEKKEPAPASEKSE) show a composition bias toward basic and acidic residues. A thioesterase (TE) domain region spans residues 1761–1951 (SPLPSARITL…KRTAIIWAKK (191 aa)).

It functions in the pathway secondary metabolite biosynthesis. Non-reducing polyketide synthase; part of the gene cluster that mediates the biosynthesis of hypothemycin, a resorcylic acid lactone (RAL) that irreversibly inhibits a subset of protein kinases with a conserved cysteine in the ATP binding site such as human ERK2. The first step is performed by both PKSs hmp3 and hmp8 and leads to the production of 7',8'-dehydrozearalenol (DHZ). The highly reducing PKS hpm8 synthesizes the reduced hexaketide (7S,11S,2E,8E)-7,11-dihydroxy-dodeca-2,8-dienoate, which is transferred downstream to the non-reducing PKS hpm3. Hpm3 then extends the reduced hexaketide to a nonaketide, after which regioselective cyclization and macrolactonization affords DHZ. The next step is the conversion of DHZ into aigialomycin C and is performed by the O-methyltransferase hmp5, the FAD-binding monooxygenase hmp7, and the cytochrome P450 monooxygenase hmp1. The wide substrate tolerance of the hmp5 and hmp7 implies that the reactions from DHZ to aigialomycin C can occur in any order. The steps from aigialomycin C to hypothemycin are less well established. The FAD-linked oxidoreductase hmp9 presumably catalyzes oxidation of the C-6' hydroxyl to a ketone. The timing of this oxidation is important, since the resulting enone functional group is a Michael acceptor that can react spontaneously with glutathione, an abundant metabolite in fungal cells. The glutathione S-transferase hmp2 catalyzes cis-trans isomerization of the 7',8' double bond with equilibrium favoring the trans isomer. The hpm6-encoded transporter might preferentially pump hypothemycin out of the cell relative to the trans isomer aigialomycin A. The cis-to-trans isomerization may be coupled with C-4' hydroxylation, since all known hypothemycin analogs containing the enone functional group also have hydroxyl groups at both C-4' and C-5'. This Hypomyces subiculosus (Nectria subiculosa) protein is Non-reducing polyketide synthase hmp3.